The chain runs to 122 residues: Large ribosomal subunit protein bL12 (122 aa).

It belongs to the bacterial ribosomal protein bL12 family. Homodimer. Part of the ribosomal stalk of the 50S ribosomal subunit. Forms a multimeric L10(L12)X complex, where L10 forms an elongated spine to which 2 to 4 L12 dimers bind in a sequential fashion. Binds GTP-bound translation factors.

Forms part of the ribosomal stalk which helps the ribosome interact with GTP-bound translation factors. Is thus essential for accurate translation. In Yersinia pseudotuberculosis serotype O:1b (strain IP 31758), this protein is Large ribosomal subunit protein bL12.